The following is a 774-amino-acid chain: Ent-beyerene synthase KSL4, chloroplastic (774 aa).

A chloroplast-targeting transit peptide spans 1 to 35 (MLLGSTNTLRISSHGKEWEGKTLTGMPLGKVNQRV). Residues Asp-525, Asp-529, Asn-668, Asp-669, Thr-672, and Glu-676 each coordinate Mg(2+). A DDXXD motif motif is present at residues 525-529 (DDFFD).

It belongs to the terpene synthase family. It depends on Mg(2+) as a cofactor.

The protein localises to the plastid. It is found in the chloroplast. It carries out the reaction ent-copalyl diphosphate = ent-beyerene + diphosphate. It catalyses the reaction ent-copalyl diphosphate = ent-atiserene + diphosphate. The enzyme catalyses ent-copalyl diphosphate = ent-kaur-16-ene + diphosphate. It functions in the pathway secondary metabolite biosynthesis; terpenoid biosynthesis. Diterpene cyclase involved in the biosynthesis of labdane-related diterpenoids (LRDs) natural products. Catalyzes the cyclization of ent-CDP into ent-beyerene as a major and ent-kaurene and ent-atiserene as minor products. The protein is Ent-beyerene synthase KSL4, chloroplastic of Ricinus communis (Castor bean).